Consider the following 235-residue polypeptide: Large ribosomal subunit protein uL3 (235 aa).

Residues 150–189 (AGGPASHGSGHHRHAGSTGMRSTPGRGLPGGKKAGQMGNE) form a disordered region.

Belongs to the universal ribosomal protein uL3 family. Part of the 50S ribosomal subunit. Forms a cluster with proteins L14 and L19.

One of the primary rRNA binding proteins, it binds directly near the 3'-end of the 23S rRNA, where it nucleates assembly of the 50S subunit. This chain is Large ribosomal subunit protein uL3, found in Protochlamydia amoebophila (strain UWE25).